An 85-amino-acid chain; its full sequence is Conotoxin Lt28.2 (85 aa).

The signal sequence occupies residues 1 to 21 (MPKLEMMLLVLLILPLCYIDA). The propeptide occupies 22 to 40 (VGPPPPWNMEDEIIEHWQK).

It belongs to the conotoxin D superfamily. In terms of processing, contains 5 disulfide bonds. In terms of tissue distribution, expressed by the venom duct.

The protein localises to the secreted. Probable neurotoxin. The protein is Conotoxin Lt28.2 of Conus litteratus (Lettered cone).